Here is a 240-residue protein sequence, read N- to C-terminus: 4-hydroxy-tetrahydrodipicolinate reductase (240 aa).

NAD(+) contacts are provided by residues 8-13, 78-80, and 102-105; these read GSTGKM, GTT, and SANM. Residue His-134 is the Proton donor/acceptor of the active site. His-135 lines the (S)-2,3,4,5-tetrahydrodipicolinate pocket. Lys-138 serves as the catalytic Proton donor. 144 to 145 contacts (S)-2,3,4,5-tetrahydrodipicolinate; it reads GT.

This sequence belongs to the DapB family.

The protein localises to the cytoplasm. The enzyme catalyses (S)-2,3,4,5-tetrahydrodipicolinate + NAD(+) + H2O = (2S,4S)-4-hydroxy-2,3,4,5-tetrahydrodipicolinate + NADH + H(+). The catalysed reaction is (S)-2,3,4,5-tetrahydrodipicolinate + NADP(+) + H2O = (2S,4S)-4-hydroxy-2,3,4,5-tetrahydrodipicolinate + NADPH + H(+). Its pathway is amino-acid biosynthesis; L-lysine biosynthesis via DAP pathway; (S)-tetrahydrodipicolinate from L-aspartate: step 4/4. In terms of biological role, catalyzes the conversion of 4-hydroxy-tetrahydrodipicolinate (HTPA) to tetrahydrodipicolinate. The polypeptide is 4-hydroxy-tetrahydrodipicolinate reductase (Rickettsia canadensis (strain McKiel)).